A 369-amino-acid polypeptide reads, in one-letter code: 3-dehydroquinate synthase (369 aa).

Residues 78-83 (DGERYK), 112-116 (GVIGD), 136-137 (TT), lysine 149, lysine 158, and 176-179 (TLTT) each bind NAD(+). Glutamate 191, histidine 254, and histidine 271 together coordinate Zn(2+).

This sequence belongs to the sugar phosphate cyclases superfamily. Dehydroquinate synthase family. It depends on NAD(+) as a cofactor. Co(2+) is required as a cofactor. Zn(2+) serves as cofactor.

It is found in the cytoplasm. It catalyses the reaction 7-phospho-2-dehydro-3-deoxy-D-arabino-heptonate = 3-dehydroquinate + phosphate. It participates in metabolic intermediate biosynthesis; chorismate biosynthesis; chorismate from D-erythrose 4-phosphate and phosphoenolpyruvate: step 2/7. In terms of biological role, catalyzes the conversion of 3-deoxy-D-arabino-heptulosonate 7-phosphate (DAHP) to dehydroquinate (DHQ). The sequence is that of 3-dehydroquinate synthase from Nitrosomonas europaea (strain ATCC 19718 / CIP 103999 / KCTC 2705 / NBRC 14298).